A 100-amino-acid chain; its full sequence is Small ribosomal subunit protein uS14 (100 aa).

It belongs to the universal ribosomal protein uS14 family. As to quaternary structure, part of the 30S ribosomal subunit. Contacts proteins S3 and S10.

Functionally, binds 16S rRNA, required for the assembly of 30S particles and may also be responsible for determining the conformation of the 16S rRNA at the A site. The chain is Small ribosomal subunit protein uS14 from Prochlorococcus marinus (strain MIT 9211).